A 438-amino-acid chain; its full sequence is Gamma-glutamyl phosphate reductase (438 aa).

This sequence belongs to the gamma-glutamyl phosphate reductase family.

Its subcellular location is the cytoplasm. It catalyses the reaction L-glutamate 5-semialdehyde + phosphate + NADP(+) = L-glutamyl 5-phosphate + NADPH + H(+). It participates in amino-acid biosynthesis; L-proline biosynthesis; L-glutamate 5-semialdehyde from L-glutamate: step 2/2. Its function is as follows. Catalyzes the NADPH-dependent reduction of L-glutamate 5-phosphate into L-glutamate 5-semialdehyde and phosphate. The product spontaneously undergoes cyclization to form 1-pyrroline-5-carboxylate. The sequence is that of Gamma-glutamyl phosphate reductase from Prochlorococcus marinus (strain MIT 9313).